Reading from the N-terminus, the 394-residue chain is Queuine tRNA-ribosyltransferase (394 aa).

Catalysis depends on Asp-95, which acts as the Proton acceptor. Residues 95-99 (DSGGF), Asp-149, Gln-190, and Gly-217 contribute to the substrate site. Residues 248 to 254 (GVGTPID) are RNA binding. The active-site Nucleophile is Asp-267. The segment at 272 to 276 (TRNAR) is RNA binding; important for wobble base 34 recognition. The Zn(2+) site is built by Cys-305, Cys-307, Cys-310, and His-337. The tract at residues 375 to 394 (NDANETVGATESTESTESTE) is disordered.

This sequence belongs to the queuine tRNA-ribosyltransferase family. Homodimer. Within each dimer, one monomer is responsible for RNA recognition and catalysis, while the other monomer binds to the replacement base PreQ1. The cofactor is Zn(2+).

It carries out the reaction 7-aminomethyl-7-carbaguanine + guanosine(34) in tRNA = 7-aminomethyl-7-carbaguanosine(34) in tRNA + guanine. It functions in the pathway tRNA modification; tRNA-queuosine biosynthesis. In terms of biological role, catalyzes the base-exchange of a guanine (G) residue with the queuine precursor 7-aminomethyl-7-deazaguanine (PreQ1) at position 34 (anticodon wobble position) in tRNAs with GU(N) anticodons (tRNA-Asp, -Asn, -His and -Tyr). Catalysis occurs through a double-displacement mechanism. The nucleophile active site attacks the C1' of nucleotide 34 to detach the guanine base from the RNA, forming a covalent enzyme-RNA intermediate. The proton acceptor active site deprotonates the incoming PreQ1, allowing a nucleophilic attack on the C1' of the ribose to form the product. After dissociation, two additional enzymatic reactions on the tRNA convert PreQ1 to queuine (Q), resulting in the hypermodified nucleoside queuosine (7-(((4,5-cis-dihydroxy-2-cyclopenten-1-yl)amino)methyl)-7-deazaguanosine). This is Queuine tRNA-ribosyltransferase from Sorangium cellulosum (strain So ce56) (Polyangium cellulosum (strain So ce56)).